The following is a 151-amino-acid chain: MATLESRLVDMLTVPVEALGFQLWGIEYVQAGKHSILRVFIDGENGINIEDCANVSRQVSAVLDVEDPISTEYTLEVSSPGVDRPLFTAEQYAAYVGEDVKLQLTMPVAGSRNLKGAITQVDGQMLSLNVNGKELVVALDNIRKGNIIAKF.

The protein belongs to the RimP family.

The protein resides in the cytoplasm. Required for maturation of 30S ribosomal subunits. This Shewanella sp. (strain MR-4) protein is Ribosome maturation factor RimP.